Here is a 244-residue protein sequence, read N- to C-terminus: Type III pantothenate kinase (244 aa).

An ATP-binding site is contributed by 7 to 14 (DIGNTRLK). Residues Tyr-95 and 102-105 (GIDR) each bind substrate. Asp-104 functions as the Proton acceptor in the catalytic mechanism. Thr-126 is a binding site for ATP. Thr-177 lines the substrate pocket.

Belongs to the type III pantothenate kinase family. As to quaternary structure, homodimer. Requires NH4(+) as cofactor. K(+) serves as cofactor.

The protein resides in the cytoplasm. The enzyme catalyses (R)-pantothenate + ATP = (R)-4'-phosphopantothenate + ADP + H(+). The protein operates within cofactor biosynthesis; coenzyme A biosynthesis; CoA from (R)-pantothenate: step 1/5. Functionally, catalyzes the phosphorylation of pantothenate (Pan), the first step in CoA biosynthesis. This Acinetobacter baumannii (strain ACICU) protein is Type III pantothenate kinase.